The sequence spans 28 residues: IDPVNVKKLQCDGDTYKCTADLDFGDGR.

In terms of assembly, homohexamer. In terms of tissue distribution, expressed by mycelium-forming spores.

The protein localises to the secreted. Its function is as follows. Alpha-(1-6)-linked L-fucose specific lectin. The chain is Alpha-(1-6)-linked fucose-specific lectin from Rhizopus stolonifer (Rhizopus nigricans).